A 213-amino-acid chain; its full sequence is Nicolin-1 (213 aa).

As to quaternary structure, part of the neuronal tubulin polyglutamylase complex which contains TPGS1, TPGS2, TTLL1, LRRC49 and NICN1. High expression level is found in brain, testis, liver and kidney. Weak expression in spleen, leukocytes, small intestine and colon.

It is found in the nucleus. The protein is Nicolin-1 (NICN1) of Homo sapiens (Human).